The chain runs to 295 residues: Pyridoxal 5'-phosphate synthase subunit PdxS (295 aa).

Aspartate 23 provides a ligand contact to D-ribose 5-phosphate. The active-site Schiff-base intermediate with D-ribose 5-phosphate is lysine 80. Glycine 152 contributes to the D-ribose 5-phosphate binding site. Arginine 164 contributes to the D-glyceraldehyde 3-phosphate binding site. D-ribose 5-phosphate-binding positions include glycine 213 and 234-235; that span reads GS.

Belongs to the PdxS/SNZ family. In the presence of PdxT, forms a dodecamer of heterodimers.

It catalyses the reaction aldehydo-D-ribose 5-phosphate + D-glyceraldehyde 3-phosphate + L-glutamine = pyridoxal 5'-phosphate + L-glutamate + phosphate + 3 H2O + H(+). It functions in the pathway cofactor biosynthesis; pyridoxal 5'-phosphate biosynthesis. Functionally, catalyzes the formation of pyridoxal 5'-phosphate from ribose 5-phosphate (RBP), glyceraldehyde 3-phosphate (G3P) and ammonia. The ammonia is provided by the PdxT subunit. Can also use ribulose 5-phosphate and dihydroxyacetone phosphate as substrates, resulting from enzyme-catalyzed isomerization of RBP and G3P, respectively. The polypeptide is Pyridoxal 5'-phosphate synthase subunit PdxS (Methanopyrus kandleri (strain AV19 / DSM 6324 / JCM 9639 / NBRC 100938)).